A 186-amino-acid chain; its full sequence is Ribosome-recycling factor (186 aa).

It belongs to the RRF family.

The protein resides in the cytoplasm. Responsible for the release of ribosomes from messenger RNA at the termination of protein biosynthesis. May increase the efficiency of translation by recycling ribosomes from one round of translation to another. This Chlorobium phaeovibrioides (strain DSM 265 / 1930) (Prosthecochloris vibrioformis (strain DSM 265)) protein is Ribosome-recycling factor.